The sequence spans 379 residues: MKYELVSTDGRARRGRLIFERGVVETPAFMPVGTYGTVKGMTPEEVAQTGAQILLGNTFHLWLRPGQEIMKLHGDLHDFMQWPGPILTDSGGFQVFSLGAMRKIKEEGVYFRNPINGSPVFLSPEKSMEIQYDLGSDIVMIFDECTPYPADWDYAKRSMEMSLRWAKRSRQRFDELGNQNALFGIIQGSVYEDLRDVSLKGLVEIGFDGYAVGGLAVGEPKEDMHRILEHVCPMIPQDKPRYLMGVGKPEDLVEGVRRGIDMFDCVMPTRNARNGHLFVTGGVVKIRNAQYKEDTTALDPECDCYTCRNYSRAYLHHLDRCNEILGARLNTIHNLRYYQRLMAALRQAIEEGKLERFAADFYGRRGRTVPPLGAADAAS.

The active-site Proton acceptor is Asp-89. Substrate is bound by residues 89 to 93 (DSGGF), Asp-143, Gln-187, and Gly-214. The RNA binding stretch occupies residues 245–251 (GVGKPED). Asp-264 (nucleophile) is an active-site residue. The interval 269-273 (TRNAR) is RNA binding; important for wobble base 34 recognition. The Zn(2+) site is built by Cys-302, Cys-304, Cys-307, and His-333.

This sequence belongs to the queuine tRNA-ribosyltransferase family. In terms of assembly, homodimer. Within each dimer, one monomer is responsible for RNA recognition and catalysis, while the other monomer binds to the replacement base PreQ1. The cofactor is Zn(2+).

The enzyme catalyses 7-aminomethyl-7-carbaguanine + guanosine(34) in tRNA = 7-aminomethyl-7-carbaguanosine(34) in tRNA + guanine. It functions in the pathway tRNA modification; tRNA-queuosine biosynthesis. In terms of biological role, catalyzes the base-exchange of a guanine (G) residue with the queuine precursor 7-aminomethyl-7-deazaguanine (PreQ1) at position 34 (anticodon wobble position) in tRNAs with GU(N) anticodons (tRNA-Asp, -Asn, -His and -Tyr). Catalysis occurs through a double-displacement mechanism. The nucleophile active site attacks the C1' of nucleotide 34 to detach the guanine base from the RNA, forming a covalent enzyme-RNA intermediate. The proton acceptor active site deprotonates the incoming PreQ1, allowing a nucleophilic attack on the C1' of the ribose to form the product. After dissociation, two additional enzymatic reactions on the tRNA convert PreQ1 to queuine (Q), resulting in the hypermodified nucleoside queuosine (7-(((4,5-cis-dihydroxy-2-cyclopenten-1-yl)amino)methyl)-7-deazaguanosine). The chain is Queuine tRNA-ribosyltransferase from Edwardsiella ictaluri (strain 93-146).